A 227-amino-acid polypeptide reads, in one-letter code: Cytidylate kinase (227 aa).

7–15 (GPSGAGKGT) is a binding site for ATP.

This sequence belongs to the cytidylate kinase family. Type 1 subfamily.

It localises to the cytoplasm. It carries out the reaction CMP + ATP = CDP + ADP. The catalysed reaction is dCMP + ATP = dCDP + ADP. The sequence is that of Cytidylate kinase from Actinobacillus succinogenes (strain ATCC 55618 / DSM 22257 / CCUG 43843 / 130Z).